We begin with the raw amino-acid sequence, 375 residues long: Lipid-A-disaccharide synthase (375 aa).

The protein belongs to the LpxB family.

The enzyme catalyses a lipid X + a UDP-2-N,3-O-bis[(3R)-3-hydroxyacyl]-alpha-D-glucosamine = a lipid A disaccharide + UDP + H(+). Its pathway is bacterial outer membrane biogenesis; LPS lipid A biosynthesis. Its function is as follows. Condensation of UDP-2,3-diacylglucosamine and 2,3-diacylglucosamine-1-phosphate to form lipid A disaccharide, a precursor of lipid A, a phosphorylated glycolipid that anchors the lipopolysaccharide to the outer membrane of the cell. In Pseudomonas putida (strain ATCC 47054 / DSM 6125 / CFBP 8728 / NCIMB 11950 / KT2440), this protein is Lipid-A-disaccharide synthase.